Here is a 761-residue protein sequence, read N- to C-terminus: Neutral ceramidase (761 aa).

The Cytoplasmic portion of the chain corresponds to 1–11; it reads MAKRTFSSLEA. The helical; Signal-anchor for type II membrane protein transmembrane segment at 12-32 threads the bilayer; sequence FLIFLLVMMTAITVALLTLLF. Residues 33-761 lie on the Lumenal side of the membrane; the sequence is VTSGTIENHK…ISSPFEIVTT (729 aa). The tract at residues 43–76 is disordered; it reads DSGNHWVSTTQGPTTTQSSPTTQTPTTQTPDLPP. Residues 50–76 show a composition bias toward low complexity; that stretch reads STTQGPTTTQSSPTTQTPTTQTPDLPP. 5 O-linked (GalNAc...) threonine glycosylation sites follow: T51, T52, T56, T57, and T58. Residues S60 and S61 are each glycosylated (O-linked (GalNAc...) serine). T63, T64, T66, T68, T69, and T71 each carry an O-linked (GalNAc...) threonine glycan. Residue L115 coordinates Ca(2+). H175 serves as a coordination point for Zn(2+). N198 carries an N-linked (GlcNAc...) asparagine glycan. H284 contributes to the Zn(2+) binding site. The active-site Nucleophile is the S335. Disulfide bonds link C343/C357 and C350/C365. N412 and N449 each carry an N-linked (GlcNAc...) asparagine glycan. C429 and C479 are oxidised to a cystine. Residues E521 and Y560 each coordinate Zn(2+). Ca(2+) contacts are provided by D693, S695, and T698. Positions 751 to 761 are required for correct folding and localization; that stretch reads GISSPFEIVTT.

Belongs to the neutral ceramidase family. Requires Zn(2+) as cofactor. In terms of processing, proteolytic cleavage of the N-terminus removes the signal-anchor and produces a soluble form of the protein. N-glycosylated. Required for enzyme activity. Post-translationally, O-glycosylated. Required to retain it as a type II membrane protein at the cell surface. In terms of processing, phosphorylated. May prevent ubiquitination and subsequent degradation. Ubiquitinated, leading to its degradation by the proteasome. Ubiquitination is triggered by nitric oxide. As to expression, highly expressed in brain, kidney and heart. Expressed at lower level in other tissues such as liver. Expressed in intestine, kidney and liver (at protein level). Localizes in the epithelia of the jejunum and ileum.

Its subcellular location is the cell membrane. It is found in the membrane raft. It localises to the membrane. The protein localises to the caveola. The protein resides in the golgi apparatus membrane. Its subcellular location is the mitochondrion. It is found in the secreted. It localises to the extracellular exosome. The catalysed reaction is an N-acylsphing-4-enine + H2O = sphing-4-enine + a fatty acid. It catalyses the reaction N-hexadecanoylsphing-4-enine + H2O = sphing-4-enine + hexadecanoate. The enzyme catalyses N-tetradecanoylsphing-4-enine + H2O = tetradecanoate + sphing-4-enine. It carries out the reaction N-(9Z-octadecenoyl)-sphing-4-enine + H2O = sphing-4-enine + (9Z)-octadecenoate. The catalysed reaction is N-(15Z-tetracosenoyl)-sphing-4-enine + H2O = (15Z)-tetracosenoate + sphing-4-enine. It catalyses the reaction N-octanoylsphing-4-enine + H2O = octanoate + sphing-4-enine. The enzyme catalyses N-dodecanoylsphing-4-enine + H2O = dodecanoate + sphing-4-enine. It carries out the reaction N-(hexanoyl)sphing-4-enine + H2O = hexanoate + sphing-4-enine. The catalysed reaction is N-octadecanoylsphing-4-enine + H2O = sphing-4-enine + octadecanoate. It catalyses the reaction sphinganine + hexadecanoate = N-hexadecanoylsphinganine + H2O. The enzyme catalyses N-(octadecanoyl)-sphinganine + H2O = sphinganine + octadecanoate. It functions in the pathway lipid metabolism; sphingolipid metabolism. The reverse reaction is inhibited by Zn(2+) and Cu(2+). Inhibited by cardiolipin and phosphatidic acid. Plasma membrane ceramidase that hydrolyzes sphingolipid ceramides into sphingosine and free fatty acids at neutral pH. Ceramides, sphingosine, and its phosphorylated form sphingosine-1-phosphate are bioactive lipids that mediate cellular signaling pathways regulating several biological processes including cell proliferation, apoptosis and differentiation. Also catalyzes the reverse reaction allowing the synthesis of ceramides from fatty acids and sphingosine. Together with sphingomyelinase, participates in the production of sphingosine and sphingosine-1-phosphate from the degradation of sphingomyelin, a sphingolipid enriched in the plasma membrane of cells. Also participates in the hydrolysis of ceramides from the extracellular milieu allowing the production of sphingosine-1-phosphate inside and outside cells. This is the case for instance with the digestion of dietary sphingolipids in the intestinal tract. In Rattus norvegicus (Rat), this protein is Neutral ceramidase (Asah2).